The primary structure comprises 166 residues: Phosphopantetheine adenylyltransferase (166 aa).

Ser11 contributes to the substrate binding site. Residues 11 to 12 (SF) and His19 each bind ATP. Residues Lys43, Leu75, and Arg89 each coordinate substrate. ATP is bound by residues 90–92 (GLR), Glu100, and 125–131 (YGYLSSS).

This sequence belongs to the bacterial CoaD family. In terms of assembly, homohexamer. Requires Mg(2+) as cofactor.

The protein localises to the cytoplasm. The enzyme catalyses (R)-4'-phosphopantetheine + ATP + H(+) = 3'-dephospho-CoA + diphosphate. Its pathway is cofactor biosynthesis; coenzyme A biosynthesis; CoA from (R)-pantothenate: step 4/5. Reversibly transfers an adenylyl group from ATP to 4'-phosphopantetheine, yielding dephospho-CoA (dPCoA) and pyrophosphate. The polypeptide is Phosphopantetheine adenylyltransferase (Syntrophotalea carbinolica (strain DSM 2380 / NBRC 103641 / GraBd1) (Pelobacter carbinolicus)).